Here is a 146-residue protein sequence, read N- to C-terminus: Ribosome-binding factor A (146 aa).

The disordered stretch occupies residues 122–146 (QQQFGSVDDVTENDIDEADDTEGKA). The span at 130–146 (DVTENDIDEADDTEGKA) shows a compositional bias: acidic residues.

The protein belongs to the RbfA family. In terms of assembly, monomer. Binds 30S ribosomal subunits, but not 50S ribosomal subunits or 70S ribosomes.

The protein resides in the cytoplasm. One of several proteins that assist in the late maturation steps of the functional core of the 30S ribosomal subunit. Associates with free 30S ribosomal subunits (but not with 30S subunits that are part of 70S ribosomes or polysomes). Required for efficient processing of 16S rRNA. May interact with the 5'-terminal helix region of 16S rRNA. This Shewanella sp. (strain MR-7) protein is Ribosome-binding factor A.